Here is an 815-residue protein sequence, read N- to C-terminus: Probable inorganic carbon transporter subunit DabA (815 aa).

Zn(2+)-binding residues include Cys334, Asp336, His507, and Cys522.

The protein belongs to the inorganic carbon transporter (TC 9.A.2) DabA family. Forms a complex with DabB. It depends on Zn(2+) as a cofactor.

It localises to the cell inner membrane. Part of an energy-coupled inorganic carbon pump. The sequence is that of Probable inorganic carbon transporter subunit DabA from Ectopseudomonas mendocina (strain ymp) (Pseudomonas mendocina).